A 356-amino-acid chain; its full sequence is MKELVNILDFLPEELGEKIKPMFRVKQIYQWIYQKYANNFSDMSSLPKDLRLELAQNFHFSPVKCVKNEQSKDGSIKYLFELVDGLRIESVLLPMKEEKIDAEGKRISHARYTICVSSQVGCKSGCSFCLTAKGGLKRNLSAGEIVGQILWIKKQNNIPYERRINIVYMGMGEPLDNLKNVSKAVKILAQNEGLAISPRRQTISTSGLAKQIKELGQMNLGVLLAISLHAVNDELRTELMPINKAYNIAAIMDAVREFPIDQRKRVMFEYLLIDGINDKLEHAKELVKLLNGIKAKVNLILFNPHEGGLYKRPSLENAIKFQDLLSNKGVTCTIRESKGLDISAACGQLKERAKEQ.

Glu89 serves as the catalytic Proton acceptor. The region spanning Ser108–Asp341 is the Radical SAM core domain. Cys115 and Cys346 are disulfide-bonded. Positions 122, 126, and 129 each coordinate [4Fe-4S] cluster. Residues Gly172–Glu173, Ser204, Ser227–His229, and Asn303 contribute to the S-adenosyl-L-methionine site. Cys346 serves as the catalytic S-methylcysteine intermediate.

It belongs to the radical SAM superfamily. RlmN family. [4Fe-4S] cluster is required as a cofactor.

Its subcellular location is the cytoplasm. It carries out the reaction adenosine(2503) in 23S rRNA + 2 reduced [2Fe-2S]-[ferredoxin] + 2 S-adenosyl-L-methionine = 2-methyladenosine(2503) in 23S rRNA + 5'-deoxyadenosine + L-methionine + 2 oxidized [2Fe-2S]-[ferredoxin] + S-adenosyl-L-homocysteine. The enzyme catalyses adenosine(37) in tRNA + 2 reduced [2Fe-2S]-[ferredoxin] + 2 S-adenosyl-L-methionine = 2-methyladenosine(37) in tRNA + 5'-deoxyadenosine + L-methionine + 2 oxidized [2Fe-2S]-[ferredoxin] + S-adenosyl-L-homocysteine. Specifically methylates position 2 of adenine 2503 in 23S rRNA and position 2 of adenine 37 in tRNAs. m2A2503 modification seems to play a crucial role in the proofreading step occurring at the peptidyl transferase center and thus would serve to optimize ribosomal fidelity. This chain is Dual-specificity RNA methyltransferase RlmN, found in Campylobacter jejuni (strain RM1221).